We begin with the raw amino-acid sequence, 668 residues long: Biosynthetic arginine decarboxylase (668 aa).

An N6-(pyridoxal phosphate)lysine modification is found at lysine 105. 286–296 (LDVGGGLGVDY) lines the substrate pocket.

The protein belongs to the Orn/Lys/Arg decarboxylase class-II family. SpeA subfamily. Mg(2+) serves as cofactor. It depends on pyridoxal 5'-phosphate as a cofactor.

The enzyme catalyses L-arginine + H(+) = agmatine + CO2. In terms of biological role, catalyzes the biosynthesis of agmatine from arginine. The polypeptide is Biosynthetic arginine decarboxylase (Rhodopirellula baltica (strain DSM 10527 / NCIMB 13988 / SH1)).